The chain runs to 70 residues: DNA-directed RNA polymerase subunit omega (70 aa).

It belongs to the RNA polymerase subunit omega family. As to quaternary structure, the RNAP catalytic core consists of 2 alpha, 1 beta, 1 beta' and 1 omega subunit. When a sigma factor is associated with the core the holoenzyme is formed, which can initiate transcription.

It carries out the reaction RNA(n) + a ribonucleoside 5'-triphosphate = RNA(n+1) + diphosphate. In terms of biological role, promotes RNA polymerase assembly. Latches the N- and C-terminal regions of the beta' subunit thereby facilitating its interaction with the beta and alpha subunits. This chain is DNA-directed RNA polymerase subunit omega, found in Bacillus cereus (strain G9842).